The sequence spans 553 residues: Putative transport protein KPN78578_40470 (553 aa).

5 helical membrane-spanning segments follow: residues 4-24, 28-48, 65-85, 95-115, and 158-178; these read IALT…IGNV, GVGF…HFVD, FGLI…FFAS, LFAI…HKLF, and MSYA…MWLV. 2 consecutive RCK C-terminal domains span residues 192–276 and 279–361; these read RFEE…VIGQ and ATSL…ELGN. The next 6 membrane-spanning stretches (helical) occupy residues 371 to 391, 403 to 425, 437 to 457, 464 to 484, 493 to 513, and 532 to 552; these read MLPV…PLFI, AGGP…LYWF, LGIV…FVAT, LSWI…VGVL, YLTL…LAFA, and PLVM…FWGL.

The protein belongs to the AAE transporter (TC 2.A.81) family. YidE subfamily.

The protein localises to the cell membrane. This Klebsiella pneumoniae subsp. pneumoniae (strain ATCC 700721 / MGH 78578) protein is Putative transport protein KPN78578_40470.